We begin with the raw amino-acid sequence, 130 residues long: Fluoride-specific ion channel FluC (130 aa).

4 helical membrane-spanning segments follow: residues 1–21, 36–56, 65–85, and 103–123; these read MGEI…RYGL, GTLI…QWGF, LKLM…TFSY, and ILAN…LGSL. Residues Gly-75 and Thr-78 each contribute to the Na(+) site.

Belongs to the fluoride channel Fluc/FEX (TC 1.A.43) family.

The protein resides in the cell membrane. The enzyme catalyses fluoride(in) = fluoride(out). Na(+) is not transported, but it plays an essential structural role and its presence is essential for fluoride channel function. Fluoride-specific ion channel. Important for reducing fluoride concentration in the cell, thus reducing its toxicity. This Dehalococcoides mccartyi (strain ATCC BAA-2266 / KCTC 15142 / 195) (Dehalococcoides ethenogenes (strain 195)) protein is Fluoride-specific ion channel FluC.